A 3938-amino-acid polypeptide reads, in one-letter code: Protein bassoon (3938 aa).

The disordered stretch occupies residues 1 to 158 (MGNEASLEGG…PTSPYSVPQI (158 aa)). Gly2 is lipidated: N-myristoyl glycine. The span at 9–29 (GGAGEGPLPPGGSGLGPGPGA) shows a compositional bias: gly residues. A compositionally biased stretch (low complexity) spans 31-61 (KPPSALAGGGQLPVAGAARAAGPPTPGLGLV). The 4 X 2 AA tandem repeats of P-G stretch occupies residues 62-70 (PGPGPGPGP). Polar residues-rich tracts occupy residues 86-98 (QRAT…QASA) and 127-154 (QVDS…SPYS). Phosphoserine is present on Ser142. The residue at position 145 (Arg145) is an Omega-N-methylarginine. 2 C4-type zinc fingers span residues 167–190 (CPIC…CTQC) and 195–217 (CNQC…CLNC). Disordered regions lie at residues 228 to 346 (TTAP…LTGK) and 361 to 456 (LMSV…KTMP). Residues 230–240 (APRSKSQQQLH) show a composition bias toward polar residues. Phosphoserine occurs at positions 241 and 245. The segment covering 361–376 (LMSVQPEADTQGQPSP) has biased composition (polar residues). Pro residues predominate over residues 394–406 (PRPPGSGPGPGPT). C4-type zinc fingers lie at residues 462-485 (CPLC…CTAC) and 490-512 (CTLC…CLNC). 4 disordered regions span residues 523-921 (GEPA…LQGG), 934-1247 (GRLW…TPAG), 1294-1541 (MDPM…WQQS), and 1561-1611 (RMVH…RAPS). The segment covering 526–539 (APLPLPTPQEPPAG) has biased composition (pro residues). Low complexity predominate over residues 548–589 (SPLKQKGPQGPGQPSGSLPPKASPQAAKASPQAAKASPQAKP). 3 repeat units span residues 568–574 (KASPQAA), 575–581 (KASPQAA), and 582–588 (KASPQAK). Residues 568–588 (KASPQAAKASPQAAKASPQAK) are 3 X 7 AA tandem repeats of K-A-S-P-Q-A-[AK]. The span at 616 to 629 (VPKPPPETAVPPGT) shows a compositional bias: pro residues. Positions 668 to 677 (QDLSRSPQSL) are enriched in polar residues. Over residues 678-692 (SDTGYSSDGVSSSQS) the composition is skewed to low complexity. The span at 693–702 (EITGVVQQEV) shows a compositional bias: polar residues. 2 stretches are compositionally biased toward acidic residues: residues 769–784 (FDSD…EDDS) and 847–858 (SAEEDNLEEDDT). Arg863 carries the omega-N-methylarginine modification. Position 965 is a phosphoserine (Ser965). Residues 979 to 996 (PASTPSYTSGTSPTSLSS) are compositionally biased toward low complexity. The stretch at 1032-1087 (IEDSSEEEELREEEELLREQEKMREVEQQRIRSTARKTRRDKEELRAQRRRERSKT) forms a coiled coil. Over residues 1034-1047 (DSSEEEELREEEEL) the composition is skewed to acidic residues. Ser1035 and Ser1036 each carry phosphoserine. Positions 1048-1061 (LREQEKMREVEQQR) are enriched in basic and acidic residues. Ser1085 is modified (phosphoserine). Residue Thr1087 is modified to Phosphothreonine. 2 positions are modified to phosphoserine: Ser1093 and Ser1099. Basic and acidic residues predominate over residues 1102 to 1117 (EELRQAAEMEELHRSS). 2 stretches are compositionally biased toward low complexity: residues 1118 to 1128 (CSEYSPSPSLD) and 1158 to 1175 (SPTE…SGRP). The stretch at 1176–1203 (LKSAEEAYEDMMRKAELLQRQQGQAAGA) forms a coiled coil. Residues 1177 to 1192 (KSAEEAYEDMMRKAEL) show a composition bias toward basic and acidic residues. A compositionally biased stretch (low complexity) spans 1194-1204 (QRQQGQAAGAR). Residues 1211–1224 (SQPTGPRSQGSFEY) are compositionally biased toward polar residues. Ser1221 is subject to Phosphoserine. Residues 1318–1328 (SFPTSTSSDSS) show a composition bias toward low complexity. O-linked (GlcNAc) threonine glycosylation is present at Thr1339. A compositionally biased stretch (basic and acidic residues) spans 1342-1351 (FAKEPQEPLK). Low complexity-rich tracts occupy residues 1352–1364 (LHSS…LASK) and 1374–1386 (PGTP…APCP). The O-linked (GlcNAc) threonine glycan is linked to Thr1380. The span at 1402-1426 (SPSTSSTIHSYGQPPTTANYGSQTE) shows a compositional bias: polar residues. Ser1470, Ser1479, and Ser1481 each carry phosphoserine. Over residues 1476 to 1487 (STPSESPTFSPS) the composition is skewed to low complexity. Composition is skewed to polar residues over residues 1496–1510 (EFST…SSDI) and 1561–1597 (RMVH…SQMP). An omega-N-methylarginine mark is found at Arg1780 and Arg1784. Arg1794 carries the post-translational modification Asymmetric dimethylarginine; alternate. An Omega-N-methylarginine; alternate modification is found at Arg1794. Arg1806 is subject to Omega-N-methylarginine. A disordered region spans residues 1914 to 1964 (PSAPDKSVTDAALPGQSSGPFYSPRDPEPPEPLTFRAQGVVGPGPHEEQRP). The O-linked (GlcNAc) threonine glycan is linked to Thr1922. 2 positions are modified to phosphoserine: Ser1978 and Ser2034. Omega-N-methylarginine is present on residues Arg2039 and Arg2069. Asymmetric dimethylarginine is present on residues Arg2243, Arg2253, and Arg2259. The disordered stretch occupies residues 2280-2305 (AAKASGAGGPPRPELPAGGAREEPLS). An O-linked (GlcNAc) threonine glycan is attached at Thr2307. 2 disordered regions span residues 2318-2343 (VAQA…SGVL) and 2461-2486 (EEQK…PPAA). Residues 2345-2470 (RPVMEKEEAS…EEQKQRQKAP (126 aa)) are a coiled coil. Thr2510 carries O-linked (GlcNAc) threonine glycosylation. The segment at 2513–2648 (PGQAREPVLH…HEASASSSAA (136 aa)) is disordered. A compositionally biased stretch (polar residues) spans 2527–2537 (SSASDMSLQTE). Ser2564 carries the post-translational modification Phosphoserine. 2 positions are modified to phosphothreonine: Thr2581 and Thr2608. The segment covering 2629–2641 (RHSDSGSDSKHEA) has biased composition (basic and acidic residues). An O-linked (GlcNAc) threonine glycan is attached at Thr2685. An interaction with DAO region spans residues 2715–3263 (EPDGQAQGVA…GGVSGRPGKD (549 aa)). A phosphoserine mark is found at Ser2796, Ser2845, and Ser2851. Positions 2839–2859 (TLQRSLSDPKPLSPTAEESAK) are disordered. Residue Thr2930 is glycosylated (O-linked (GlcNAc) threonine). Positions 2933 to 2975 (SLLRELDRDLRLVEHESTKLRKKQAELDEEEKEIDAKLKYLEL) form a coiled coil. The segment at 2934–2996 (LLRELDRDLR…DRVGRDYPPL (63 aa)) is sufficient for binding to ERC2. Ser3007 carries the post-translational modification Phosphoserine. A compositionally biased stretch (polar residues) spans 3055–3068 (TQYTAGSSGPTQNG). Disordered stretches follow at residues 3055-3148 (TQYT…ADLE), 3162-3399 (AVTV…SRKF), 3414-3546 (QQRY…PRAH), and 3569-3910 (YHLG…VFSK). A compositionally biased stretch (basic and acidic residues) spans 3184-3196 (EHGKAPEHPRGGD). The segment covering 3198 to 3222 (SSVSQSPAPTYPSDSHYTSLEQNVP) has biased composition (polar residues). A Phosphoserine modification is found at Ser3286. Residues 3304–3315 (ESNGRPASTHYY) show a composition bias toward polar residues. 3 stretches are compositionally biased toward basic and acidic residues: residues 3316–3328 (SDSD…RADK), 3358–3377 (QGME…KDVE), and 3450–3469 (LSSH…RETA). Ser3368 bears the Phosphoserine mark. Arg3488 bears the Omega-N-methylarginine mark. Positions 3506 to 3520 (PLGRPRPAGGALPPG) are enriched in low complexity. 2 stretches are compositionally biased toward basic and acidic residues: residues 3535–3546 (VQEHVKDGPRAH) and 3578–3588 (WFDKPRDARSD). Positions 3638–3651 (EHRHHGDHGRHSGR) are enriched in basic residues. Residues 3652 to 3676 (HAGEEPGRRAARPHARDMGRHETRP) show a composition bias toward basic and acidic residues. Positions 3751 to 3820 (PQQSQPPSSR…ARLQQQSQPT (70 aa)) are enriched in low complexity. The stretch at 3772-3803 (QTQQQQQQQQQQQQQQQQQQQQQQQQGLGQQA) forms a coiled coil. Arg3822 bears the Omega-N-methylarginine mark. A compositionally biased stretch (pro residues) spans 3834–3848 (KPQPGPTTAPGPQPA). Composition is skewed to low complexity over residues 3860-3887 (KPAA…KTGA) and 3894-3904 (GAPAGQPAAEG).

As to quaternary structure, interacts with PCLO, ERC2/CAST1, RIMS1 and UNC13A. Interacts with TPRG1L. Interacts with DYNLL1 and DYNLL2; these interactions potentially link PTVs to dynein and myosin V motor complexes. Interacts with ATG5; this interaction is important for the regulation of presynaptic autophagy. Interacts (via C-terminus) with TRIO (via N-terminus). Interacts with CTBP1. Interacts with SIAH1; this interaction negatively regulates SIAH1 E3 ligase activity. Interacts (via coiled region) with DAO; the interaction is direct. Myristoylated. The N-terminal myristoylation is not sufficient for presynaptic localization. As to expression, detected at synapses in the stratum lucidum in the hippocampus CA3 region (at protein level).

The protein resides in the cytoplasm. The protein localises to the presynaptic active zone. It localises to the cytoskeleton. It is found in the cytoplasmic vesicle. Its subcellular location is the secretory vesicle. The protein resides in the synaptic vesicle membrane. Scaffold protein of the presynaptic cytomatrix at the active zone (CAZ) which is the place in the synapse where neurotransmitter is released. After synthesis, participates in the formation of Golgi-derived membranous organelles termed Piccolo-Bassoon transport vesicles (PTVs) that are transported along axons to sites of nascent synaptic contacts. At the presynaptic active zone, regulates the spatial organization of synaptic vesicle cluster, the protein complexes that execute membrane fusion and compensatory endocytosis. Also functions in processes other than assembly such as the regulation of specific presynaptic protein ubiquitination by interacting with SIAH1 or the regulation of presynaptic autophagy by associating with ATG5. Also mediates synapse to nucleus communication leading to reconfiguration of gene expression by associating with the transcriptional corepressor CTBP1 and by subsequently reducing the size of its pool available for nuclear import. Inhibits the activity of the proportion of DAO enzyme that localizes to the presynaptic active zone, which may modulate synaptic transmission. The chain is Protein bassoon from Rattus norvegicus (Rat).